The chain runs to 479 residues: Chromosomal replication initiator protein DnaA (479 aa).

The tract at residues 1–71 is domain I, interacts with DnaA modulators; sequence MNLTQIWKAT…RNALARVVGY (71 aa). A domain II region spans residues 71–138; sequence YPVQVQVLIA…LDLASAMRSG (68 aa). The span at 86–99 shows a compositional bias: polar residues; sequence TEPSPSLTLSNGSR. The segment at 86–106 is disordered; that stretch reads TEPSPSLTLSNGSRLMSDPEP. A domain III, AAA+ region region spans residues 139–355; the sequence is MLNPRYTFSS…GSLNRVAAYA (217 aa). Residues G183, G185, K186, and T187 each contribute to the ATP site. The interval 356–479 is domain IV, binds dsDNA; that stretch reads ELNRAPITIE…IRERIQMLRG (124 aa).

Belongs to the DnaA family. In terms of assembly, oligomerizes as a right-handed, spiral filament on DNA at oriC.

Its subcellular location is the cytoplasm. Functionally, plays an essential role in the initiation and regulation of chromosomal replication. ATP-DnaA binds to the origin of replication (oriC) to initiate formation of the DNA replication initiation complex once per cell cycle. Binds the DnaA box (a 9 base pair repeat at the origin) and separates the double-stranded (ds)DNA. Forms a right-handed helical filament on oriC DNA; dsDNA binds to the exterior of the filament while single-stranded (ss)DNA is stabiized in the filament's interior. The ATP-DnaA-oriC complex binds and stabilizes one strand of the AT-rich DNA unwinding element (DUE), permitting loading of DNA polymerase. After initiation quickly degrades to an ADP-DnaA complex that is not apt for DNA replication. Binds acidic phospholipids. This is Chromosomal replication initiator protein DnaA from Chloroflexus aurantiacus (strain ATCC 29366 / DSM 635 / J-10-fl).